A 428-amino-acid polypeptide reads, in one-letter code: Enolase (428 aa).

Glutamine 163 is a binding site for (2R)-2-phosphoglycerate. Catalysis depends on glutamate 205, which acts as the Proton donor. Positions 242, 286, and 313 each coordinate Mg(2+). Lysine 338, arginine 367, serine 368, and lysine 389 together coordinate (2R)-2-phosphoglycerate. The Proton acceptor role is filled by lysine 338.

This sequence belongs to the enolase family. Requires Mg(2+) as cofactor.

Its subcellular location is the cytoplasm. It is found in the secreted. The protein localises to the cell surface. It catalyses the reaction (2R)-2-phosphoglycerate = phosphoenolpyruvate + H2O. It functions in the pathway carbohydrate degradation; glycolysis; pyruvate from D-glyceraldehyde 3-phosphate: step 4/5. Catalyzes the reversible conversion of 2-phosphoglycerate (2-PG) into phosphoenolpyruvate (PEP). It is essential for the degradation of carbohydrates via glycolysis. The chain is Enolase from Lactobacillus acidophilus (strain ATCC 700396 / NCK56 / N2 / NCFM).